The sequence spans 499 residues: ADP,ATP carrier protein 5 (499 aa).

11 helical membrane-spanning segments follow: residues 25 to 45 (LGKFIPMSALMFCILFNQNIL), 61 to 81 (IAGFAKVYCVTPAAALFVIIY), 93 to 113 (IFYYLSAFFISFFVLFAFVIY), 148 to 168 (YIVYYSLAELWPNIFYVLLFW), 183 to 203 (FYTFFSLFGNSSLILVGFLMM), 223 to 243 (ITLVQVSTTIVAIVAIVCCVL), 286 to 306 (LWLLLICSAAFGFAINLVEAV), 327 to 347 (LYILWTGVAIMVMTIIGNNVM), 356 to 376 (AVISPVIIMVTGILFFVLIVF), 380 to 400 (ILSLFDGAILMSPLALAVSIG), and 468 to 488 (SISPILMVVFTFVCLAWIYAV).

Belongs to the ADP/ATP translocase tlc family.

It localises to the cell membrane. In terms of biological role, provides the rickettsial cell with host ATP in exchange for rickettsial ADP. This is an obligate exchange system. This energy acquiring activity is an important component of rickettsial parasitism. In Rickettsia felis (strain ATCC VR-1525 / URRWXCal2) (Rickettsia azadi), this protein is ADP,ATP carrier protein 5 (tlcE).